The sequence spans 244 residues: 5-oxoprolinase subunit A (244 aa).

It belongs to the LamB/PxpA family. In terms of assembly, forms a complex composed of PxpA, PxpB and PxpC.

The enzyme catalyses 5-oxo-L-proline + ATP + 2 H2O = L-glutamate + ADP + phosphate + H(+). In terms of biological role, catalyzes the cleavage of 5-oxoproline to form L-glutamate coupled to the hydrolysis of ATP to ADP and inorganic phosphate. This is 5-oxoprolinase subunit A from Escherichia coli (strain SMS-3-5 / SECEC).